The primary structure comprises 1470 residues: Roundabout homolog 2 (1470 aa).

An N-terminal signal peptide occupies residues 1 to 21 (MNPLMFTLLLLFGFLCIQIDG). At 22-863 (SRLRQEDFPP…EQITDVVKQP (842 aa)) the chain is on the extracellular side. Ig-like C2-type domains are found at residues 31 to 127 (PRIV…ASLE), 133 to 220 (DDFR…AELT), 225 to 309 (PTFL…ATLT), 318 to 413 (PQFV…LEVT), and 422 to 508 (PIIL…AVLD). A disulfide bond links cysteine 52 and cysteine 110. N-linked (GlcNAc...) asparagine glycosylation is present at asparagine 123. 3 cysteine pairs are disulfide-bonded: cysteine 154/cysteine 203, cysteine 246/cysteine 293, and cysteine 339/cysteine 395. An N-linked (GlcNAc...) asparagine glycan is attached at asparagine 430. Residues cysteine 443 and cysteine 492 are joined by a disulfide bond. 3 consecutive Fibronectin type-III domains span residues 528–622 (PPSK…TQDI), 641–739 (VVVR…TEEA), and 743–840 (PPQS…IGGR). 4 N-linked (GlcNAc...) asparagine glycosylation sites follow: asparagine 756, asparagine 786, asparagine 793, and asparagine 849. A helical transmembrane segment spans residues 864-884 (AFIAGIGGACWVILMGFSIWL). The Cytoplasmic segment spans residues 885–1470 (YWRRKKRKGL…GSNSQGQFTE (586 aa)). Disordered stretches follow at residues 1036-1089 (GFGY…LPGT), 1129-1159 (EDRVPTPPVRGVASSPAISFGQQSTATLTPS), 1190-1371 (IQSN…DCPA), and 1383-1470 (DWIN…QFTE). The segment covering 1144–1158 (PAISFGQQSTATLTP) has biased composition (polar residues). Threonine 1157 bears the Phosphothreonine mark. Residue serine 1159 is modified to Phosphoserine. Positions 1194-1203 (TPPPQPPAPP) are enriched in pro residues. Residues 1215–1231 (LETDVPDEDADDEEEPL) are compositionally biased toward acidic residues. The segment covering 1243 to 1288 (TPGSSMDNLDSSVTGKAFSSSQRQRPTSPFSTDSNTSAAQNQSQRP) has biased composition (polar residues). A compositionally biased stretch (pro residues) spans 1315 to 1325 (DLPPPPDPPPG). Over residues 1328–1343 (LRQQIGLSQHSGNVEN) the composition is skewed to polar residues. Positions 1413-1437 (SKPSFPSPGGHSSSGTSSSKGSTGP) are enriched in low complexity. A compositionally biased stretch (polar residues) spans 1461–1470 (GSNSQGQFTE).

This sequence belongs to the immunoglobulin superfamily. ROBO family. In terms of assembly, interacts with SLIT2. Expressed in embryonal spinal cord.

It localises to the membrane. Its function is as follows. Receptor for SLIT2, and probably SLIT1, which are thought to act as molecular guidance cue in cellular migration, including axonal navigation at the ventral midline of the neural tube and projection of axons to different regions during neuronal development. In Mus musculus (Mouse), this protein is Roundabout homolog 2 (Robo2).